Here is a 418-residue protein sequence, read N- to C-terminus: Tektin-1 (418 aa).

Coiled coils occupy residues 21 to 107, 134 to 177, 266 to 308, and 333 to 384; these read KNQY…TLKE, HELI…DLKD, NGLK…DQEG, and AQYR…NTIY.

This sequence belongs to the tektin family. As to quaternary structure, microtubule inner protein component of sperm flagellar doublet microtubules. In terms of processing, ubiquitinated, leading to its degradation. Deubiquitinated by USP16, promoting its stability. As to expression, predominantly expressed in testis. Expressed in airway epithelial cells.

It localises to the cytoplasm. The protein localises to the cytoskeleton. Its subcellular location is the cilium axoneme. The protein resides in the flagellum axoneme. Microtubule inner protein (MIP) part of the dynein-decorated doublet microtubules (DMTs) in cilia and flagellar axoneme. Forms filamentous polymers in the walls of ciliary and flagellar microtubules. This Homo sapiens (Human) protein is Tektin-1 (TEKT1).